The following is a 384-amino-acid chain: GDP-mannose transporter (384 aa).

The Cytoplasmic segment spans residues 1 to 40 (MVEDKKTDDYTIEMDKMDQGSKNFEAAAPPPQPRTPPAGS). The helical transmembrane segment at 41-61 (ISNNPILPVLAYCGSSILMTV) threads the bilayer. Residues 62 to 69 (MNKYVLSG) are Lumenal-facing. Residues 70-90 (LDFNLNFFLLCVQSIVCIVAI) traverse the membrane as a helical segment. Over 91-110 (QTCKSCGLITYRDFSADEAR) the chain is Cytoplasmic. Residues 111-127 (KWFPITLLLIGMIYTGS) form a helical membrane-spanning segment. The Lumenal portion of the chain corresponds to 128-134 (KALQFLS). A helical membrane pass occupies residues 135–151 (IPVYTIFKNLTIILIAY). Residues 152–160 (GEVLWFGGS) are Cytoplasmic-facing. Residues 161-182 (VTGLTLFSFGLMVLSSIIAAWA) traverse the membrane as a helical segment. Topologically, residues 183–200 (DIKHAVESTGDATAKVST) are lumenal. Residues 201 to 221 (LNAGYIWMLVNCLCTSSYVLG) traverse the membrane as a helical segment. The Cytoplasmic segment spans residues 222 to 236 (MRKRIKLTNFKDFDT). The chain crosses the membrane as a helical span at residues 237–257 (LAMFYNNLLSIPVLIVLTGLM). Residues 258-276 (EDWSSANITRNFPPADRNN) are Lumenal-facing. N-linked (GlcNAc...) asparagine glycosylation is present at N264. A helical transmembrane segment spans residues 277–297 (IIFAMILSGLSSVFISYTSAW). At 298–305 (CVRVTSST) the chain is on the cytoplasmic side. Residues 306–326 (TYSMVGALNKLPIALSGLIFF) traverse the membrane as a helical segment. The Lumenal portion of the chain corresponds to 327–329 (DAP). A helical transmembrane segment spans residues 330-350 (VTFPSVSAIVVGFVSGIVYAV). Topologically, residues 351 to 384 (AKIKQNAKPKTGVLPMSNPPVSASSQSMRDSLRS) are cytoplasmic. Residues 364 to 384 (LPMSNPPVSASSQSMRDSLRS) form a disordered region. A compositionally biased stretch (polar residues) spans 369-384 (PPVSASSQSMRDSLRS).

The protein belongs to the TPT transporter family. SLC35D subfamily. In terms of assembly, homooligomer.

It is found in the golgi apparatus membrane. It localises to the cytoplasmic vesicle membrane. Its subcellular location is the endoplasmic reticulum membrane. Functionally, involved in the import of GDP-mannose from the cytoplasm into the Golgi lumen. The sequence is that of GDP-mannose transporter (gmt1) from Aspergillus terreus (strain NIH 2624 / FGSC A1156).